The primary structure comprises 212 residues: Peroxisomal membrane protein 4 (212 aa).

The next 2 membrane-spanning stretches (helical) occupy residues 97-117 and 151-171; these read GGTH…LLFG and LKWD…LWLF. N206 carries N-linked (GlcNAc...) asparagine glycosylation.

This sequence belongs to the peroxisomal membrane protein PXMP2/4 family. In terms of assembly, interacts with PEX19. Liver.

The protein localises to the peroxisome membrane. In Rattus norvegicus (Rat), this protein is Peroxisomal membrane protein 4 (Pxmp4).